A 264-amino-acid chain; its full sequence is Short chain dehydrogenase/reductase dmxR18 (264 aa).

The NADP(+) site is built by Ile-24, Asp-70, Asn-97, and Arg-130. Residues Ser-146 and Ser-147 each act as proton donor in the active site. NADP(+) is bound by residues Tyr-161, Lys-165, and Thr-196. The active-site Proton acceptor is the Tyr-161. Lys-165 functions as the Lowers pKa of active site Tyr in the catalytic mechanism.

The protein belongs to the short-chain dehydrogenases/reductases (SDR) family.

The enzyme catalyses 3,8,9,10-tetrahydroxy-6-methyl-1,4-dihydroanthracen-1-one + NADPH + H(+) = (3R)-3,8,9,10-tetrahydroxy-6-methyl-1,2,3,4-tetrahydroanthracen-1-one + NADP(+). It participates in secondary metabolite biosynthesis. Its function is as follows. Short chain dehydrogenase/reductase; part of the gene cluster that mediates the biosynthesis of the dimeric xanthones cryptosporioptides. The pathway begins with the synthesis of atrochrysone thioester by the polyketide synthase dmx-nrPKS. The atrochrysone carboxyl ACP thioesterase dmxR1 then breaks the thioester bond and releases the atrochrysone carboxylic acid from dmx-nrPKS. Atrochrysone carboxylic acid is decarboxylated by the decarboxylase dmxR15, and oxidized by the anthrone oxygenase dmxR16 to yield emodin. Emodin is then reduced to emodin hydroquinone by the oxidoreductase dmxR7. A-ring reduction by the short chain dehydrogenase dmxR18, dehydration by the scytalone dehydratase-like protein dmxR17 and probable spontaneous re-oxidation, results in overall deoxygenation to chrysophanol. Baeyer-Villiger oxidation by the Baeyer-Villiger monooxygenase (BVMO) dmxR6 then yields monodictylactone in equilibrium with monodictyphenone. In the case of the cryptosporioptides biosynthesis, monodictylactone is reduced at C-12 to an alcohol (by the short chain dehydrogenases dmxR12 or dmxR8) and hydroxylated at C-5 by dmxR9, yielding the electron-rich aromatic which could eliminate H(2)O to form the ortho-quinonemethide, followed by tautomerisation to paraquinone and complete the formal reduction to produce the 10-methylgroup. Conjugate addition of C-4a-OH to the resulting paraquinone by the monooxygenase dmxR10 then gives cyclohexadienone, which is then reduced at C-5 by the short chain dehydrogenase dmxR3 to give the dihydroxanthone. The 6,7-epoxide in the cryptosporioptides could be introduced by the cytochrome P450 monooxygenase dmxL3. The highly reducing PKS dmxL2 manufactures butyrate, which is further carboxylated by dmxL1 to form ethylmalonate. It is not yet clear whether the carboxylation occurs while the butyrate is attached to the ACP of dmxL2, but this unusual fungal metabolite could then be esterified to O-5 by the O-acetyltransferase dmxR13. Finally, dimerization performed by dmxR5 gives the observed dimers cryptosporioptides A, B and C as the final products of the pathway. The polypeptide is Short chain dehydrogenase/reductase dmxR18 (Cryptosporiopsis sp. (strain 8999)).